Here is an 80-residue protein sequence, read N- to C-terminus: Clavanin-D (80 aa).

The N-terminal stretch at 1–19 (MKTTILILLILGLGINAKS) is a signal peptide. Positions 20–29 (LEERKSEEEK) are excised as a propeptide. A Phenylalanine amide modification is found at Phe52. Residues 54–80 (DDQQDNGKFYGHYAEDNGKHWYDTGDQ) constitute a propeptide that is removed on maturation.

In terms of tissue distribution, hemocytes and pharyngeal tissues.

The protein localises to the secreted. Has antimicrobial activity against E.coli, L.monocytogenes and C.albicans. The polypeptide is Clavanin-D (Styela clava (Sea squirt)).